A 752-amino-acid chain; its full sequence is Photosystem I P700 chlorophyll a apoprotein A1 (752 aa).

The next 8 membrane-spanning stretches (helical) occupy residues 73-96, 159-182, 198-222, 294-312, 349-372, 388-414, 436-458, and 533-551; these read IFSA…FHGA, LYWI…FHYH, MNHH…HVAL, IAHH…GHMY, WHAQ…HHMY, LSLF…IFMV, SIIA…FYIH, and FMVH…LILL. Positions 575 and 584 each coordinate [4Fe-4S] cluster. The next 2 helical transmembrane spans lie at 591–612 and 666–688; these read HVFL…HFSW and ASAY…MFLF. His-677 provides a ligand contact to chlorophyll a'. Chlorophyll a contacts are provided by Met-685 and Tyr-693. Position 694 (Trp-694) interacts with phylloquinone. The helical transmembrane segment at 726 to 746 threads the bilayer; it reads AVGLAHYLLGGIGTTWAFFLA.

It belongs to the PsaA/PsaB family. As to quaternary structure, the PsaA/B heterodimer binds the P700 chlorophyll special pair and subsequent electron acceptors. PSI consists of a core antenna complex that captures photons, and an electron transfer chain that converts photonic excitation into a charge separation. The eukaryotic PSI reaction center is composed of at least 11 subunits. It depends on P700 is a chlorophyll a/chlorophyll a' dimer, A0 is one or more chlorophyll a, A1 is one or both phylloquinones and FX is a shared 4Fe-4S iron-sulfur center. as a cofactor.

The protein resides in the plastid. It localises to the chloroplast thylakoid membrane. It carries out the reaction reduced [plastocyanin] + hnu + oxidized [2Fe-2S]-[ferredoxin] = oxidized [plastocyanin] + reduced [2Fe-2S]-[ferredoxin]. Its function is as follows. PsaA and PsaB bind P700, the primary electron donor of photosystem I (PSI), as well as the electron acceptors A0, A1 and FX. PSI is a plastocyanin/cytochrome c6-ferredoxin oxidoreductase, converting photonic excitation into a charge separation, which transfers an electron from the donor P700 chlorophyll pair to the spectroscopically characterized acceptors A0, A1, FX, FA and FB in turn. Oxidized P700 is reduced on the lumenal side of the thylakoid membrane by plastocyanin or cytochrome c6. The chain is Photosystem I P700 chlorophyll a apoprotein A1 from Phaeodactylum tricornutum (strain CCAP 1055/1).